A 100-amino-acid chain; its full sequence is NADH-quinone oxidoreductase subunit K (100 aa).

Helical transmembrane passes span 3-23, 29-49, and 60-80; these read PTSY…VGVI, LVLF…LVTF, and IVVF…LALL.

This sequence belongs to the complex I subunit 4L family. As to quaternary structure, NDH-1 is composed of 14 different subunits. Subunits NuoA, H, J, K, L, M, N constitute the membrane sector of the complex.

The protein localises to the cell membrane. The catalysed reaction is a quinone + NADH + 5 H(+)(in) = a quinol + NAD(+) + 4 H(+)(out). NDH-1 shuttles electrons from NADH, via FMN and iron-sulfur (Fe-S) centers, to quinones in the respiratory chain. The immediate electron acceptor for the enzyme in this species is believed to be ubiquinone. Couples the redox reaction to proton translocation (for every two electrons transferred, four hydrogen ions are translocated across the cytoplasmic membrane), and thus conserves the redox energy in a proton gradient. The polypeptide is NADH-quinone oxidoreductase subunit K (Roseiflexus castenholzii (strain DSM 13941 / HLO8)).